Consider the following 748-residue polypeptide: tRNA endonuclease ANKZF1 (748 aa).

Residues 96-120 (LFCSACDQIFQNHQEQREHYKLDWH) form a C2H2-type zinc finger. The tract at residues 135–185 (SASDFEQQSSTGDLSSISGSDDTDSSSEEDLLPLDEGRAESEKPNRPPGFY) is disordered. The span at 143–154 (SSTGDLSSISGS) shows a compositional bias: low complexity. Residues 155-167 (DDTDSSSEEDLLP) are compositionally biased toward acidic residues. The segment covering 169-179 (DEGRAESEKPN) has biased composition (basic and acidic residues). Residues 227 to 370 (GPRYYVVLMA…QRVLHKLTTL (144 aa)) enclose the VLRF1 domain. Residue glutamine 270 is part of the active site. Serine 282 and serine 385 each carry phosphoserine. Positions 383 to 408 (FHSPETHWKPVREERKKDTEKEKTKV) are enriched in basic and acidic residues. Disordered regions lie at residues 383–438 (FHSP…SEVE) and 460–497 (RRRR…TQEV). Over residues 429 to 438 (SQEEDGSEVE) the composition is skewed to acidic residues. The segment covering 484–497 (QPQDEPFSQPTQEV) has biased composition (polar residues). An ANK 1 repeat occupies 515–545 (ELWDTLLAACRAGEVEVLKLQLATGLVDPGV). A Phosphoserine modification is found at serine 555. Residues 556–585 (GGFTLLHAAAAAGRGLVVRLLLEAGADPTV) form an ANK 2 repeat. The interval 621-677 (KARVPGPLTQEMEARQATRKKEQKAARRQREQQQRKQREQEEQEQEEQRRFAALSDR) is disordered. The stretch at 628 to 681 (LTQEMEARQATRKKEQKAARRQREQQQRKQREQEEQEQEEQRRFAALSDREKRA) forms a coiled coil. Threonine 629 is subject to Phosphothreonine. A compositionally biased stretch (basic and acidic residues) spans 632–677 (MEARQATRKKEQKAARRQREQQQRKQREQEEQEQEEQRRFAALSDR). Positions 654-666 (QRKQREQEEQEQE) are VCP/p97-interacting motif (VIM). Phosphoserine is present on serine 702.

This sequence belongs to the ANKZF1/VMS1 family. As to quaternary structure, interacts (via VIM motif) with VCP.

The protein localises to the cytoplasm. Endonuclease that cleaves polypeptidyl-tRNAs downstream of the ribosome-associated quality control (RQC) pathway to release incompletely synthesized polypeptides for degradation. The RQC pathway disassembles aberrantly stalled translation complexes to recycle or degrade the constituent parts. ANKZF1 acts downstream disassembly of stalled ribosomes and specifically cleaves off the terminal 3'-CCA nucleotides universal to all tRNAs from polypeptidyl-tRNAs, releasing (1) ubiquitinated polypeptides from 60S ribosomal subunit for degradation and (2) cleaved tRNAs. ANKZF1-cleaved tRNAs are then repaired and recycled by ELAC1 and TRNT1. Also plays a role in the cellular response to hydrogen peroxide and in the maintenance of mitochondrial integrity under conditions of cellular stress. This Mus musculus (Mouse) protein is tRNA endonuclease ANKZF1.